A 436-amino-acid chain; its full sequence is Acrosin (436 aa).

An N-terminal signal peptide occupies residues 1-19 (MVEMLPTVAVLVLAVSVVA). Residue Asn22 is glycosylated (N-linked (GlcNAc...) asparagine). Disulfide bonds link Cys25–Cys155, Cys29–Cys163, Cys74–Cys90, Cys178–Cys247, Cys210–Cys226, and Cys237–Cys267. Residues 43–291 (IVSGQSAQLG…YLDWIASKIG (249 aa)) form the Peptidase S1 domain. Active-site charge relay system residues include His89 and Asp143. Residue Asn211 is glycosylated (N-linked (GlcNAc...) asparagine). Ser241 acts as the Charge relay system in catalysis. The propeptide at 346-436 (PSSTQTSSSL…NKPSEPFLHS (91 aa)) is pro-rich.

The protein belongs to the peptidase S1 family. As to quaternary structure, heavy chain (catalytic) and a light chain linked by two disulfide bonds. Forms a heterodimer with SERPINA5.

The catalysed reaction is Preferential cleavage: Arg-|-Xaa, Lys-|-Xaa.. With respect to regulation, inhibited by SERPINA5. In terms of biological role, acrosin is the major protease of mammalian spermatozoa. It is a serine protease of trypsin-like cleavage specificity, it is synthesized in a zymogen form, proacrosin and stored in the acrosome. The sequence is that of Acrosin (Acr) from Mus musculus (Mouse).